Here is a 643-residue protein sequence, read N- to C-terminus: tRNA 5-methylaminomethyl-2-thiouridine biosynthesis bifunctional protein MnmC (643 aa).

Residues 1–223 (MPDRLVSATL…VDDRLVGDYA (223 aa)) are tRNA (mnm(5)s(2)U34)-methyltransferase. An FAD-dependent cmnm(5)s(2)U34 oxidoreductase region spans residues 247–643 (IGAGLAGCAV…LRARRVGSAG (397 aa)).

In the N-terminal section; belongs to the methyltransferase superfamily. tRNA (mnm(5)s(2)U34)-methyltransferase family. It in the C-terminal section; belongs to the DAO family. It depends on FAD as a cofactor.

The protein resides in the cytoplasm. It catalyses the reaction 5-aminomethyl-2-thiouridine(34) in tRNA + S-adenosyl-L-methionine = 5-methylaminomethyl-2-thiouridine(34) in tRNA + S-adenosyl-L-homocysteine + H(+). In terms of biological role, catalyzes the last two steps in the biosynthesis of 5-methylaminomethyl-2-thiouridine (mnm(5)s(2)U) at the wobble position (U34) in tRNA. Catalyzes the FAD-dependent demodification of cmnm(5)s(2)U34 to nm(5)s(2)U34, followed by the transfer of a methyl group from S-adenosyl-L-methionine to nm(5)s(2)U34, to form mnm(5)s(2)U34. This chain is tRNA 5-methylaminomethyl-2-thiouridine biosynthesis bifunctional protein MnmC, found in Burkholderia cenocepacia (strain HI2424).